Consider the following 61-residue polypeptide: Photosystem II reaction center protein K (61 aa).

The propeptide occupies 1-24; sequence MLNILNLICICLNFALYSSSFFFT. The helical transmembrane segment at 40–60 threads the bilayer; it reads MPVIPLFFFLLAFVWQAAVSF.

This sequence belongs to the PsbK family. As to quaternary structure, PSII is composed of 1 copy each of membrane proteins PsbA, PsbB, PsbC, PsbD, PsbE, PsbF, PsbH, PsbI, PsbJ, PsbK, PsbL, PsbM, PsbT, PsbX, PsbY, PsbZ, Psb30/Ycf12, at least 3 peripheral proteins of the oxygen-evolving complex and a large number of cofactors. It forms dimeric complexes.

The protein localises to the plastid. It is found in the chloroplast thylakoid membrane. One of the components of the core complex of photosystem II (PSII). PSII is a light-driven water:plastoquinone oxidoreductase that uses light energy to abstract electrons from H(2)O, generating O(2) and a proton gradient subsequently used for ATP formation. It consists of a core antenna complex that captures photons, and an electron transfer chain that converts photonic excitation into a charge separation. This Populus alba (White poplar) protein is Photosystem II reaction center protein K.